Reading from the N-terminus, the 295-residue chain is Probable peptidyl-prolyl cis-trans isomerase B (295 aa).

Disordered stretches follow at residues 105 to 128 (SADK…PATV) and 274 to 295 (IASG…LRLD). The 169-residue stretch at 126–294 (ATVSASMATN…TEVTIESLRL (169 aa)) folds into the PPIase cyclophilin-type domain.

This sequence belongs to the cyclophilin-type PPIase family.

It catalyses the reaction [protein]-peptidylproline (omega=180) = [protein]-peptidylproline (omega=0). In terms of biological role, PPIases accelerate the folding of proteins. It catalyzes the cis-trans isomerization of proline imidic peptide bonds in oligopeptides. The chain is Probable peptidyl-prolyl cis-trans isomerase B (ppiB) from Mycobacterium leprae (strain TN).